We begin with the raw amino-acid sequence, 24 residues long: FMGGLIKAATKIVPAAYCAITKKC.

C18 and C24 form a disulfide bridge.

In terms of tissue distribution, expressed by the skin glands.

The protein resides in the secreted. Functionally, has antibacterial activity against the Gram-positive bacterium S.aureus ATCC 25923 (MIC=3 uM) and the Gram-negative bacterium E.coli ATCC 25726 (MIC=24 uM). This chain is Brevinin-1PTa, found in Pulchrana picturata (Malaysian fire frog).